Reading from the N-terminus, the 153-residue chain is Regulator of sigma D (153 aa).

It belongs to the Rsd/AlgQ family. As to quaternary structure, interacts with RpoD.

Its subcellular location is the cytoplasm. Functionally, binds RpoD and negatively regulates RpoD-mediated transcription activation by preventing the interaction between the primary sigma factor RpoD with the catalytic core of the RNA polymerase and with promoter DNA. May be involved in replacement of the RNA polymerase sigma subunit from RpoD to RpoS during the transition from exponential growth to the stationary phase. The polypeptide is Regulator of sigma D (Pectobacterium carotovorum subsp. carotovorum (strain PC1)).